Consider the following 336-residue polypeptide: Terephthalate 1,2-dioxygenase, reductase component 2 (336 aa).

A 2Fe-2S ferredoxin-type domain is found at 3-91 (HQIHIHDSDI…DIRIHPSSFR (89 aa)). Residues cysteine 37, cysteine 42, cysteine 45, and cysteine 75 each contribute to the [2Fe-2S] cluster site. Positions 98 to 197 (RKRFTAKVYS…ELPFGSIALK (100 aa)) constitute an FAD-binding FR-type domain.

As to quaternary structure, monomer. Part of a multicomponent enzyme system composed of a reductase (TphA1I or TphA1II) and a two-subunit oxygenase component (TphA2I or TphA2II and TphA3I or TphA3II). FAD serves as cofactor. Requires [2Fe-2S] cluster as cofactor.

It carries out the reaction terephthalate + NADH + O2 + H(+) = (3S,4R)-3,4-dihydroxycyclohexa-1,5-diene-1,4-dicarboxylate + NAD(+). In terms of biological role, component of the terephthalate 1,2-dioxygenase multicomponent enzyme system which catalyzes the dioxygenation of terephthalate (TER/TPA) to 1,2-dihydroxy-3,5-cyclohexadiene-1,4-dicarboxylic acid (DCD). TphA1 probably reduces TphA2A3. It can also use 2,5-dicarboxypyridine (PDC) and 1,4-napthalenedicarboxylic acid (NDC) as substrates, and preferentially uses NADPH which is the physiological electron donor. The polypeptide is Terephthalate 1,2-dioxygenase, reductase component 2 (tphA1II) (Comamonas sp).